The sequence spans 251 residues: Glucosamine-6-phosphate deaminase (251 aa).

Asp73 (proton acceptor; for enolization step) is an active-site residue. Catalysis depends on Asn142, which acts as the For ring-opening step. His144 functions as the Proton acceptor; for ring-opening step in the catalytic mechanism. The active-site For ring-opening step is the Glu149.

It belongs to the glucosamine/galactosamine-6-phosphate isomerase family. NagB subfamily.

It catalyses the reaction alpha-D-glucosamine 6-phosphate + H2O = beta-D-fructose 6-phosphate + NH4(+). The protein operates within amino-sugar metabolism; N-acetylneuraminate degradation; D-fructose 6-phosphate from N-acetylneuraminate: step 5/5. Its function is as follows. Catalyzes the reversible isomerization-deamination of glucosamine 6-phosphate (GlcN6P) to form fructose 6-phosphate (Fru6P) and ammonium ion. This chain is Glucosamine-6-phosphate deaminase, found in Rhodopirellula baltica (strain DSM 10527 / NCIMB 13988 / SH1).